The sequence spans 466 residues: 3-isopropylmalate dehydratase large subunit 1 (466 aa).

[4Fe-4S] cluster is bound by residues Cys-347, Cys-407, and Cys-410.

The protein belongs to the aconitase/IPM isomerase family. LeuC type 1 subfamily. Heterodimer of LeuC and LeuD. It depends on [4Fe-4S] cluster as a cofactor.

It catalyses the reaction (2R,3S)-3-isopropylmalate = (2S)-2-isopropylmalate. It functions in the pathway amino-acid biosynthesis; L-leucine biosynthesis; L-leucine from 3-methyl-2-oxobutanoate: step 2/4. Catalyzes the isomerization between 2-isopropylmalate and 3-isopropylmalate, via the formation of 2-isopropylmaleate. In Salmonella choleraesuis (strain SC-B67), this protein is 3-isopropylmalate dehydratase large subunit 1.